The chain runs to 458 residues: Argininosuccinate lyase (458 aa).

The protein belongs to the lyase 1 family. Argininosuccinate lyase subfamily.

It localises to the cytoplasm. The enzyme catalyses 2-(N(omega)-L-arginino)succinate = fumarate + L-arginine. Its pathway is amino-acid biosynthesis; L-arginine biosynthesis; L-arginine from L-ornithine and carbamoyl phosphate: step 3/3. This chain is Argininosuccinate lyase, found in Acetivibrio thermocellus (strain ATCC 27405 / DSM 1237 / JCM 9322 / NBRC 103400 / NCIMB 10682 / NRRL B-4536 / VPI 7372) (Clostridium thermocellum).